The chain runs to 218 residues: Ras-related protein RABA1i (218 aa).

A GTP-binding site is contributed by glycine 20–serine 27. An Effector region motif is present at residues serine 42–phenylalanine 50. GTP-binding positions include aspartate 68–glutamine 72, asparagine 126–aspartate 129, and serine 156–alanine 157. S-geranylgeranyl cysteine attachment occurs at residues cysteine 215 and cysteine 216.

It belongs to the small GTPase superfamily. Rab family.

The protein resides in the cell membrane. Functionally, intracellular vesicle trafficking and protein transport. The protein is Ras-related protein RABA1i (RABA1I) of Arabidopsis thaliana (Mouse-ear cress).